Reading from the N-terminus, the 394-residue chain is LL-diaminopimelate aminotransferase (394 aa).

Positions 14 and 41 each coordinate substrate. Pyridoxal 5'-phosphate is bound by residues Tyr-71, 104–105, Tyr-128, Asn-174, Tyr-205, and 233–235; these read AK and SFS. Residues Lys-105, Tyr-128, and Asn-174 each coordinate substrate. N6-(pyridoxal phosphate)lysine is present on Lys-236. Arg-244 and Asn-275 together coordinate pyridoxal 5'-phosphate. Residues Asn-275 and Arg-369 each contribute to the substrate site.

It belongs to the class-I pyridoxal-phosphate-dependent aminotransferase family. LL-diaminopimelate aminotransferase subfamily. As to quaternary structure, homodimer. It depends on pyridoxal 5'-phosphate as a cofactor.

It carries out the reaction (2S,6S)-2,6-diaminopimelate + 2-oxoglutarate = (S)-2,3,4,5-tetrahydrodipicolinate + L-glutamate + H2O + H(+). It participates in amino-acid biosynthesis; L-lysine biosynthesis via DAP pathway; LL-2,6-diaminopimelate from (S)-tetrahydrodipicolinate (aminotransferase route): step 1/1. Involved in the synthesis of meso-diaminopimelate (m-DAP or DL-DAP), required for both lysine and peptidoglycan biosynthesis. Catalyzes the direct conversion of tetrahydrodipicolinate to LL-diaminopimelate. Is also able to use meso-diaminopimelate, cystathionine, lysine or ornithine as substrates. This is LL-diaminopimelate aminotransferase from Chlamydia trachomatis serovar D (strain ATCC VR-885 / DSM 19411 / UW-3/Cx).